The sequence spans 554 residues: Cytochrome c oxidase subunit 1-alpha (554 aa).

A helical transmembrane segment spans residues 26–56 (KDIGVLYLFTAGLAGLISVTLTVYMRMELQH). Cysteine 63 and cysteine 77 are oxidised to a cystine. 6 helical membrane passes run 81–118 (AHLWNVVVTYHGILMMFFVVIPALFGGFGNYFMPLHIG), 127–148 (LNNLSYWLYVCGVSLAIASLLS), 175–203 (AMDLAIFAVHVSGATSILGAINIITTFLN), 215–248 (PLFAWAVFITAWMILLSLPVLAGGITMLLMDRNF), 260–295 (DPVLYQHILWFFGHPEVYMLILPGFGIISHVISTFA), and 301–319 (GYLPMVLAMAAIAFLGFIV). Histidine 91 lines the Fe(II)-heme a pocket. Positions 273 and 277 each coordinate Cu cation. Positions 273-277 (HPEVY) form a cross-link, 1'-histidyl-3'-tyrosine (His-Tyr). The Cu cation site is built by histidine 322 and histidine 323. Transmembrane regions (helical) follow at residues 331-359 (LTQQTYFQMATMTIAVPTGIKVFSWIATM), 367-390 (KTPMLWALAFLFTVGGVTGVVIAQ), 399-425 (DTYYIVAHFHYVMSLGALFAIFAGTYY), 436-463 (PEWAGQLHFWMMFIGSNLIFFPQHFLGR), and 478-508 (SYWNNISSIGAYISFASFLFFIGIVFYTLFA). Histidine 406 is a binding site for heme a3. A Fe(II)-heme a-binding site is contributed by histidine 408.

This sequence belongs to the heme-copper respiratory oxidase family. The cofactor is Cu(2+). It depends on heme as a cofactor.

It localises to the cell inner membrane. The catalysed reaction is 4 Fe(II)-[cytochrome c] + O2 + 8 H(+)(in) = 4 Fe(III)-[cytochrome c] + 2 H2O + 4 H(+)(out). It functions in the pathway energy metabolism; oxidative phosphorylation. Its function is as follows. Subunit I and II form the functional core of the enzyme complex. Electrons originating in cytochrome c are transferred via heme a and Cu(A) to the binuclear center formed by heme a3 and Cu(B). This cytochrome c oxidase shows proton pump activity across the membrane in addition to the electron transfer. This chain is Cytochrome c oxidase subunit 1-alpha (ctaDI), found in Paracoccus denitrificans.